Consider the following 143-residue polypeptide: Large ribosomal subunit protein uL11 (143 aa).

The protein belongs to the universal ribosomal protein uL11 family. As to quaternary structure, part of the ribosomal stalk of the 50S ribosomal subunit. Interacts with L10 and the large rRNA to form the base of the stalk. L10 forms an elongated spine to which L12 dimers bind in a sequential fashion forming a multimeric L10(L12)X complex. In terms of processing, one or more lysine residues are methylated.

Functionally, forms part of the ribosomal stalk which helps the ribosome interact with GTP-bound translation factors. This is Large ribosomal subunit protein uL11 from Bifidobacterium longum subsp. infantis (strain ATCC 15697 / DSM 20088 / JCM 1222 / NCTC 11817 / S12).